Reading from the N-terminus, the 545-residue chain is MAVSAPLRSLEEEVTCSICLDYLRDPVTIDCGHVFCRSCTSDIRPISGNRPVCPLCKKPFKKENIRPVWQLASLVENIERLKVDNGRQPGELAREPQDMKLCERHQEKLHYYCEDDGKLLCVMCRESREHRPHTAVLVEKAALPHREKILNHLNTLRRDRDKIQGFQAKGEADILAALTKLQEQRQYIVAEFKQGHQFLKKREQHLLDQLATLEQLLTEGREKFKTRGVSELDRLTLVISELEGKARQPAAELMQDVCTTQDTKDFANKYPRKKFWIGKAIPHMVKRKAGEFSDKLLSLQRGLRQFQGKLLRDLEYKTVSVTLDPQSASGYLHLSEDWKCVTYTGQYQSDCLLPQQFDCEPGVLGSKGFTWGKVYWEVELEREGWSEDEEEGEEEEEGEEEEEDEEVGYGDGYEDWETDEEDESLGEEEEEEEEEEEEVQESCMVGVAKDSVKRKGDLSLRPEDGVWALRLSPSGIWANTSPEAQLFPVLRPRRVGIALDYEGGTVTFTNAESQELIYTFTTTFTRRLVPFLWLKWPGARLLLRP.

The segment at 16 to 57 (CSICLDYLRDPVTIDCGHVFCRSCTSDIRPISGNRPVCPLCK) adopts an RING-type zinc-finger fold. The segment at 97 to 138 (QDMKLCERHQEKLHYYCEDDGKLLCVMCRESREHRPHTAVLV) adopts a B box-type zinc-finger fold. Zn(2+) contacts are provided by cysteine 102, histidine 105, cysteine 124, and histidine 130. A coiled-coil region spans residues 197–243 (QFLKKREQHLLDQLATLEQLLTEGREKFKTRGVSELDRLTLVISELE). One can recognise a B30.2/SPRY domain in the interval 301-545 (RGLRQFQGKL…WPGARLLLRP (245 aa)). Residues 382-443 (REGWSEDEEE…EEEEEVQESC (62 aa)) are disordered. A compositionally biased stretch (acidic residues) spans 386–440 (SEDEEEGEEEEEGEEEEEDEEVGYGDGYEDWETDEEDESLGEEEEEEEEEEEEVQ).

It belongs to the TRIM/RBCC family. In terms of assembly, interacts with TBK1; this interaction bridges together TBK1 and NEMO in order to activate TBK1. Interacts with INCA1. Autoubiquitinates upon viral infection. In turn, autoubiquitinated TRIM26 recruits NEMO and bridges TBK1-NEMO interaction.

The protein resides in the cytoplasm. The protein localises to the nucleus. It catalyses the reaction S-ubiquitinyl-[E2 ubiquitin-conjugating enzyme]-L-cysteine + [acceptor protein]-L-lysine = [E2 ubiquitin-conjugating enzyme]-L-cysteine + N(6)-ubiquitinyl-[acceptor protein]-L-lysine.. E3 ubiquitin-protein ligase which regulates the IFN-beta production and antiviral response downstream of various DNA-encoded pattern-recognition receptors (PRRs). Also plays a central role in determining the response to different forms of oxidative stress by controlling levels of DNA glycosylases NEIL1, NEIL3 and NTH1 that are involved in repair of damaged DNA. Promotes nuclear IRF3 ubiquitination and proteasomal degradation. Bridges together TBK1 and NEMO during the innate response to viral infection leading to the activation of TBK1. Positively regulates LPS-mediated inflammatory innate immune response by catalyzing the 'Lys-11'-linked polyubiquitination of TAB1 to enhance its activation and subsequent NF-kappa-B and MAPK signaling. In a manner independent of its catalytic activity, inhibits WWP2, a SOX2-directed E3 ubiquitin ligase, and thus protects SOX2 from polyubiquitination and proteasomal degradation. Ubiquitinates the histone acetyltransferase protein complex component PHF20 and thereby triggers its degradation in the nucleus after its recruitment by the histone demethylase KDM6B, serving as a scaffold protein. Upon induction by TGF-beta, ubiquitinates the TFIID component TAF7 for proteasomal degradation. Induces ferroptosis by ubiquitinating SLC7A11, a critical protein for lipid reactive oxygen species (ROS) scavenging. This chain is Tripartite motif-containing protein 26 (Trim26), found in Mus musculus (Mouse).